A 448-amino-acid polypeptide reads, in one-letter code: MREIVHLQTGQCGNQIGAAFWQTISGEHGLDSNGVYNGTSELQLERMSVYFNEASGNKYVPRAVLVDLEPGTMDAVRAGPFGQLFRPDNFVFGQSGAGNNWAKGHYTEGAELVDNVLDVVRREAEGCDCLQGFQITHSLGGGTGAGMGTLLISKIREEFPDRMMATFSVVPSPKVSDTVVEPYNATLSVHQLVENSDETFCIDNEALYDICMRTLKLSNPSYGDLNYLVSAVMSGVTTCLRFPGQLNSDLRKLAVNMVPFPRLHFFMVGFAPLTSRGAHSFRAVSVPELTQQMFDPKNMMAASDFRNGRYLTCSAIFRGKVAMKEVEDQMRNVQNKNSSYFVEWIPNNIQTALCAIPPRGLKMSSTFIGNSTSIQELFKRVGEQFTAMFRRKAFLHWYTGEGMDEMEFTEAESNMNDLVSEYQQYQDAGVDEEEEEYDEEAPVEEPLE.

Residues Q11, E69, S138, G142, T143, G144, N204, and N226 each contribute to the GTP site. E69 lines the Mg(2+) pocket. The segment at 425-448 (YQDAGVDEEEEEYDEEAPVEEPLE) is disordered. Positions 429–448 (GVDEEEEEYDEEAPVEEPLE) are enriched in acidic residues.

This sequence belongs to the tubulin family. In terms of assembly, dimer of alpha and beta chains. A typical microtubule is a hollow water-filled tube with an outer diameter of 25 nm and an inner diameter of 15 nM. Alpha-beta heterodimers associate head-to-tail to form protofilaments running lengthwise along the microtubule wall with the beta-tubulin subunit facing the microtubule plus end conferring a structural polarity. Microtubules usually have 13 protofilaments but different protofilament numbers can be found in some organisms and specialized cells. It depends on Mg(2+) as a cofactor.

The protein resides in the cytoplasm. The protein localises to the cytoskeleton. Tubulin is the major constituent of microtubules, a cylinder consisting of laterally associated linear protofilaments composed of alpha- and beta-tubulin heterodimers. Microtubules grow by the addition of GTP-tubulin dimers to the microtubule end, where a stabilizing cap forms. Below the cap, tubulin dimers are in GDP-bound state, owing to GTPase activity of alpha-tubulin. The sequence is that of Tubulin beta chain from Metarhizium anisopliae (Entomophthora anisopliae).